Consider the following 730-residue polypeptide: Catalase-peroxidase (730 aa).

Residues 1 to 11 are compositionally biased toward basic and acidic residues; the sequence is MDAKTDDKDAG. A signal peptide spans 1 to 21; that stretch reads MDAKTDDKDAGKCPFSSGSHA. Residues 1–24 are disordered; it reads MDAKTDDKDAGKCPFSSGSHAHRN. A cross-link (tryptophyl-tyrosyl-methioninium (Trp-Tyr) (with M-244)) is located at residues 96–218; it reads WHSAGTYRIS…LGAVQMGLIY (123 aa). The active-site Proton acceptor is histidine 97. A cross-link (tryptophyl-tyrosyl-methioninium (Tyr-Met) (with W-96)) is located at residues 218-244; sequence YVNPEGPNGNPDPVGSAKDIRETFYRM. Histidine 259 contacts heme b.

This sequence belongs to the peroxidase family. Peroxidase/catalase subfamily. As to quaternary structure, homodimer or homotetramer. Heme b is required as a cofactor. Post-translationally, formation of the three residue Trp-Tyr-Met cross-link is important for the catalase, but not the peroxidase activity of the enzyme.

The enzyme catalyses H2O2 + AH2 = A + 2 H2O. It catalyses the reaction 2 H2O2 = O2 + 2 H2O. Bifunctional enzyme with both catalase and broad-spectrum peroxidase activity. This is Catalase-peroxidase from Rhodopseudomonas palustris (strain BisA53).